The following is a 157-amino-acid chain: 17.6 kDa class I heat shock protein 3 (157 aa).

The region spanning 43–157 (DVAAFTNAKV…PEVKSIDISG (115 aa)) is the sHSP domain.

Belongs to the small heat shock protein (HSP20) family. In terms of assembly, may form oligomeric structures.

It localises to the cytoplasm. This Arabidopsis thaliana (Mouse-ear cress) protein is 17.6 kDa class I heat shock protein 3 (HSP17.6C).